We begin with the raw amino-acid sequence, 737 residues long: Polyribonucleotide nucleotidyltransferase (737 aa).

Mg(2+)-binding residues include aspartate 489 and aspartate 495. The region spanning 556-615 (PKIDTIKIDVDKIKIVIGKGGETIDKIIAETGVKIDIDEEGNVSIYSSDQDAINRAKEII) is the KH domain. One can recognise an S1 motif domain in the interval 625 to 693 (DEVYRAKVVR…EKGRIDASMK (69 aa)). The interval 691–737 (SMKALLPRPPKPEHDEKGEKSERPHRPRHHKDHKPKKEFTETPKDSE) is disordered. Basic and acidic residues predominate over residues 700–714 (PKPEHDEKGEKSERP). Residues 715-724 (HRPRHHKDHK) show a composition bias toward basic residues. Over residues 725–737 (PKKEFTETPKDSE) the composition is skewed to basic and acidic residues.

Belongs to the polyribonucleotide nucleotidyltransferase family. It depends on Mg(2+) as a cofactor.

It is found in the cytoplasm. The enzyme catalyses RNA(n+1) + phosphate = RNA(n) + a ribonucleoside 5'-diphosphate. In terms of biological role, involved in mRNA degradation. Catalyzes the phosphorolysis of single-stranded polyribonucleotides processively in the 3'- to 5'-direction. The polypeptide is Polyribonucleotide nucleotidyltransferase (Streptococcus pneumoniae (strain 70585)).